Consider the following 137-residue polypeptide: Cytochrome c2 (137 aa).

The signal sequence occupies residues 1-21; that stretch reads MKISLTAATVAALVLAAPAFA. Heme c contacts are provided by Cys34, Cys37, His38, and Met117.

It belongs to the cytochrome c family. Post-translationally, binds 1 heme c group covalently per subunit.

Its function is as follows. Cytochrome c2 is found mainly in purple, non-sulfur, photosynthetic bacteria where it functions as the electron donor to the oxidized bacteriochlorophyll in the photophosphorylation pathway. However, it may also have a role in the respiratory chain and is found in some non-photosynthetic bacteria. The chain is Cytochrome c2 (cycA) from Rhodobacter capsulatus (strain ATCC BAA-309 / NBRC 16581 / SB1003).